A 186-amino-acid chain; its full sequence is Trafficking protein particle complex subunit 5 (186 aa).

It belongs to the TRAPP small subunits family. BET3 subfamily. As to quaternary structure, part of the multisubunit TRAPP (transport protein particle) complex.

Its subcellular location is the golgi apparatus. It localises to the cis-Golgi network. It is found in the endoplasmic reticulum. Functionally, may play a role in vesicular transport from endoplasmic reticulum to Golgi. The sequence is that of Trafficking protein particle complex subunit 5 (trappc5) from Dictyostelium discoideum (Social amoeba).